A 162-amino-acid polypeptide reads, in one-letter code: Photosystem II extrinsic protein V (162 aa).

Residues 1 to 25 (MLKRCLWLVVTVLFAWQVFNGTAIA) form the signal peptide. Heme c-binding residues include cysteine 62, cysteine 65, histidine 66, and histidine 117.

It belongs to the cytochrome c family. PsbV subfamily. As to quaternary structure, PSII is composed of 1 copy each of membrane proteins PsbA, PsbB, PsbC, PsbD, PsbE, PsbF, PsbH, PsbI, PsbJ, PsbK, PsbL, PsbM, PsbT, PsbX, PsbY, PsbZ, Psb30/Ycf12, peripheral proteins PsbO, CyanoQ (PsbQ), PsbU, PsbV and a large number of cofactors. It forms dimeric complexes. Requires heme c as cofactor.

Its subcellular location is the cellular thylakoid membrane. In terms of biological role, one of the extrinsic, lumenal subunits of photosystem II (PSII). PSII is a light-driven water plastoquinone oxidoreductase, using light energy to abstract electrons from H(2)O, generating a proton gradient subsequently used for ATP formation. The extrinsic proteins stabilize the structure of photosystem II oxygen-evolving complex (OEC), the ion environment of oxygen evolution and protect the OEC against heat-induced inactivation. Low-potential cytochrome c that plays a role in the OEC of PSII. The polypeptide is Photosystem II extrinsic protein V (Cyanothece sp. (strain PCC 7425 / ATCC 29141)).